A 208-amino-acid polypeptide reads, in one-letter code: Large ribosomal subunit protein uL3 (208 aa).

Positions 116–148 (GFQGVIKRHGQSRGPMAHGSRYHRRPGSMGPVA) are disordered.

This sequence belongs to the universal ribosomal protein uL3 family. As to quaternary structure, part of the 50S ribosomal subunit. Forms a cluster with proteins L14 and L19.

In terms of biological role, one of the primary rRNA binding proteins, it binds directly near the 3'-end of the 23S rRNA, where it nucleates assembly of the 50S subunit. This is Large ribosomal subunit protein uL3 from Streptococcus agalactiae serotype Ia (strain ATCC 27591 / A909 / CDC SS700).